A 473-amino-acid polypeptide reads, in one-letter code: TOX high mobility group box family member 2 (473 aa).

Disordered stretches follow at residues M1–H42, G139–Y211, S277–Q302, and L340–R473. Polar residues predominate over residues L8 to E20. The tract at residues Y25–L63 is required for transcriptional activation. Positions G153–S164 are enriched in low complexity. Residues D171 to K188 are compositionally biased toward basic and acidic residues. Residues A172–P201 carry the Nuclear localization signal motif. Residues K189–K199 show a composition bias toward basic residues. Positions P204–R272 form a DNA-binding region, HMG box. Low complexity-rich tracts occupy residues L373–P382 and S415–S440. A compositionally biased stretch (polar residues) spans S463–R473.

Highly expressed in ovary, where it is restricted to undifferentiated granulosa cells. Expressed in hypothalamus, pituitary gland, testis and uterus.

It is found in the nucleus. Functionally, putative transcriptional activator involved in the hypothalamo-pituitary-gonadal system. This is TOX high mobility group box family member 2 (Tox2) from Rattus norvegicus (Rat).